The sequence spans 224 residues: Peroxiredoxin-6 (224 aa).

Residues 5-169 (LLLGDEAPNF…ILRVVDSLQL (165 aa)) enclose the Thioredoxin domain. A required and sufficient for targeting to lysosomes and lamellar bodies region spans residues 31 to 40 (DSWGILFSHP). Position 44 is a phosphothreonine (threonine 44). Catalysis depends on cysteine 47, which acts as the Cysteine sulfenic acid (-SOH) intermediate; for peroxidase activity. Position 63 is an N6-acetyllysine (lysine 63). Tyrosine 89 carries the post-translational modification Phosphotyrosine. Residue aspartate 140 is the For phospholipase activity of the active site. Threonine 177 carries the phosphothreonine; by MAPK modification. Residue lysine 209 is modified to N6-acetyllysine; alternate. Position 209 is an N6-succinyllysine; alternate (lysine 209).

It belongs to the peroxiredoxin family. Prx6 subfamily. As to quaternary structure, homodimer. Interacts with GSTP1; mediates PRDX6 glutathionylation and regeneration. Interacts with APEX1. Interacts with STH. May interact with FAM168B. May interact with HTR2A. Post-translationally, phosphorylation at Thr-177 by MAP kinases increases the phospholipase activity of the enzyme. Phosphorylated form exhibits a greater lysophosphatidylcholine acyltransferase activity compared to the non-phosphorylated form. In terms of processing, irreversibly inactivated by overoxidation of Cys-47 to sulfinic acid (Cys-SO(2)H) and sulfonic acid (Cys-SO(3)H) forms upon oxidative stress.

Its subcellular location is the cytoplasm. The protein resides in the lysosome. The enzyme catalyses a hydroperoxide + 2 glutathione = an alcohol + glutathione disulfide + H2O. The catalysed reaction is a 1,2-diacyl-sn-glycero-3-phosphocholine + H2O = a 1-acyl-sn-glycero-3-phosphocholine + a fatty acid + H(+). It carries out the reaction a 1-acyl-sn-glycero-3-phosphocholine + an acyl-CoA = a 1,2-diacyl-sn-glycero-3-phosphocholine + CoA. It catalyses the reaction 1-hexadecanoyl-sn-glycero-3-phosphocholine + hexadecanoyl-CoA = 1,2-dihexadecanoyl-sn-glycero-3-phosphocholine + CoA. The enzyme catalyses 1,2-dihexadecanoyl-sn-glycero-3-phosphocholine + H2O = 1-hexadecanoyl-sn-glycero-3-phosphocholine + hexadecanoate + H(+). Functionally, thiol-specific peroxidase that catalyzes the reduction of hydrogen peroxide and organic hydroperoxides to water and alcohols, respectively. Can reduce H(2)O(2) and short chain organic, fatty acid, and phospholipid hydroperoxides. Also has phospholipase activity, can therefore either reduce the oxidized sn-2 fatty acyl group of phospholipids (peroxidase activity) or hydrolyze the sn-2 ester bond of phospholipids (phospholipase activity). These activities are dependent on binding to phospholipids at acidic pH and to oxidized phospholipds at cytosolic pH. Plays a role in cell protection against oxidative stress by detoxifying peroxides and in phospholipid homeostasis. Exhibits acyl-CoA-dependent lysophospholipid acyltransferase which mediates the conversion of lysophosphatidylcholine (1-acyl-sn-glycero-3-phosphocholine or LPC) into phosphatidylcholine (1,2-diacyl-sn-glycero-3-phosphocholine or PC). Shows a clear preference for LPC as the lysophospholipid and for palmitoyl CoA as the fatty acyl substrate. This is Peroxiredoxin-6 (Prdx6) from Rattus norvegicus (Rat).